An 83-amino-acid polypeptide reads, in one-letter code: CDC42 small effector protein 2 (83 aa).

2 S-palmitoyl cysteine lipidation sites follow: cysteine 10 and cysteine 11. A CRIB domain is found at 28 to 41; the sequence is IGEPTNFVHTAHVG. Residues serine 42 and serine 51 each carry the phosphoserine modification.

This sequence belongs to the CDC42SE/SPEC family. Interacts with CDC42 (in GTP-bound form). Interacts weakly with RAC1 and not at all with RHOA.

Its subcellular location is the cytoplasm. The protein resides in the cytoskeleton. It localises to the cell membrane. The protein localises to the cell projection. It is found in the phagocytic cup. Probably involved in the organization of the actin cytoskeleton by acting downstream of CDC42, inducing actin filament assembly. Alters CDC42-induced cell shape changes. In activated T-cells, may play a role in CDC42-mediated F-actin accumulation at the immunological synapse. May play a role in early contractile events in phagocytosis in macrophages. This chain is CDC42 small effector protein 2 (Cdc42se2), found in Rattus norvegicus (Rat).